The following is a 5206-amino-acid chain: Multifunctional-autoprocessing repeats-in-toxin (5206 aa).

An N-terminal signal peptide occupies residues methionine 1–alanine 19. 39 RtxA repeats span residues glycine 101–serine 118, glycine 121–threonine 138, glycine 141–leucine 157, glycine 161–threonine 184, glycine 187–threonine 204, glycine 207–threonine 224, glycine 255–histidine 272, glycine 275–phenylalanine 291, glycine 584–tyrosine 601, glycine 604–threonine 620, glycine 624–threonine 641, glycine 644–glycine 658, alanine 741–glycine 753, methionine 759–glycine 771, alanine 782–leucine 798, methionine 801–threonine 816, methionine 820–threonine 835, glycine 841–leucine 855, methionine 858–alanine 875, methionine 877–asparagine 891, methionine 896–aspartate 910, methionine 915–alanine 932, methionine 934–leucine 950, methionine 972–asparagine 984, methionine 991–serine 1006, glycine 1031–leucine 1043, alanine 1067–aspartate 1079, alanine 1087–valine 1102, glycine 1110–isoleucine 1122, alanine 1125–asparagine 1142, tryptophan 1145–arginine 1159, alanine 1163–valine 1179, glycine 1184–threonine 1199, alanine 1201–valine 1217, alanine 1220–phenylalanine 1236, lysine 1242–threonine 1256, alanine 1258–threonine 1275, alanine 1296–alanine 1313, and methionine 1315–asparagine 1332. Residues serine 1606–leucine 1626 show a composition bias toward polar residues. Disordered regions lie at residues serine 1606 to alanine 1682 and isoleucine 1738 to alanine 1895. Basic and acidic residues predominate over residues serine 1627–glutamine 1646. Positions glycine 1652–alanine 1671 are enriched in polar residues. Over residues alanine 1778–alanine 1805 the composition is skewed to basic and acidic residues. Positions asparagine 1825–alanine 1834 are enriched in polar residues. Positions lysine 1835–glycine 1849 are enriched in basic and acidic residues. Residues serine 1870–alanine 1880 are compositionally biased toward polar residues. Residues glutamate 2377 to leucine 2461 are membrane localization region (MLD). The segment at glutamate 2537–leucine 2901 is rho inactivation domain (RID). Positions valine 2998 to alanine 3113 are ABH effector region. Residues proline 4111–tryptophan 4295 enclose the Peptidase C80 domain. Residues glutamate 4117–arginine 4119, lysine 4144–histidine 4145, and arginine 4175 contribute to the 1D-myo-inositol hexakisphosphate site. Histidine 4181 acts as the For cysteine protease activity in catalysis. Residue serine 4226 coordinates 1D-myo-inositol hexakisphosphate. The Nucleophile; for cysteine protease activity role is filled by cysteine 4230. 1D-myo-inositol hexakisphosphate-binding positions include serine 4259–arginine 4261, arginine 4272–lysine 4273, lysine 4285, and lysine 4290. Disordered stretches follow at residues glycine 4333–lysine 4362 and leucine 4738–aspartate 4779. A compositionally biased stretch (low complexity) spans serine 4750–alanine 4762.

Mg(2+) serves as cofactor.

The protein localises to the secreted. Its subcellular location is the host cytoplasm. The protein resides in the host cytosol. It is found in the host cell membrane. The enzyme catalyses L-lysyl-/S-(2E,6E,10E)-geranylgeranyl-L-cysteinyl-[protein] + hexadecanoyl-CoA = N(6)-hexadecanoyl-L-lysyl-/S-(2E,6E,10E)-geranylgeranyl-L-cysteinyl-[protein] + CoA + H(+). It catalyses the reaction L-lysyl-/S-(2E,6E,10E)-geranylgeranyl-L-cysteinyl-[protein] + dodecanoyl-CoA = N(6)-dodecanoyl-L-lysyl-/S-(2E,6E,10E)-geranylgeranyl-L-cysteinyl-[protein] + CoA + H(+). It carries out the reaction L-lysyl-/S-(2E,6E,10E)-geranylgeranyl-L-cysteinyl-[protein] + decanoyl-CoA = N(6)-decanoyl-L-lysyl-/S-(2E,6E,10E)-geranylgeranyl-L-cysteinyl-[protein] + CoA + H(+). In terms of biological role, precursor of a multifunctional toxin that causes destruction of the actin cytoskeleton by covalent cross-linking of actin and inactivation of Rho GTPases when translocated into the host cytoplasm. Upon translocation into the host cell, undergoes autoprocessing in cis mediated by the peptidase C80 domain (also named CPD domain): the protease activity is activated upon binding inositol hexakisphosphate (InsP6) present at the host cell membrane and delivers the Cysteine protease domain-containing toxin F3 chain to the host cytosol. The Cysteine protease domain-containing toxin F3 chain will then further cleave and release effector toxin chains that cause disassembly of the actin cytoskeleton and enhance V.vulnificus colonization of the small intestine, possibly by facilitating evasion of phagocytic cells. Its function is as follows. Following autocatalytic cleavage in cis, this chain mediates processing in trans to release other individual toxin chains to the host cytosol. Released effector toxin chains cause disassembly of the actin cytoskeleton and enhance V.vulnificus colonization of the small intestine, possibly by facilitating evasion of phagocytic cells. Actin-directed toxin that catalyzes the covalent cross-linking of host cytoplasmic monomeric actin. Mediates the cross-link between 'Lys-50' of one monomer and 'Glu-270' of another actin monomer, resulting in formation of highly toxic actin oligomers that cause cell rounding. The toxin can be highly efficient at very low concentrations by acting on formin homology family proteins: toxic actin oligomers bind with high affinity to formins and adversely affect both nucleation and elongation abilities of formins, causing their potent inhibition in both profilin-dependent and independent manners. Acts as an acid--amino-acid ligase that transfers the gamma-phosphoryl group of ATP to the 'Glu-270' actin residue, resulting in the formation of an activated acyl phosphate intermediate. This intermediate is further hydrolyzed and the energy of hydrolysis is utilized for the formation of the amide bond between actin subunits. Functionally, N-epsilon-fatty acyltransferase that mediates lysine-palmitoylation of host Rho GTPase proteins, with a strong preference for host Rac1. After delivery to the host cytosol, localizes to the host cell membrane where it palmitoylates host Rho GTPase proteins, resulting in loss of all active GTP-bound Rho and subsequent actin depolymerization. Prenylation of host Rac1 at the C-terminus is required for lysine-palmitoylation. In terms of biological role, indirectly activates the small GTPase CDC42. This is Multifunctional-autoprocessing repeats-in-toxin from Vibrio vulnificus.